The sequence spans 513 residues: Calcium-dependent protein kinase 2 (513 aa).

Glycine 2 is lipidated: N-myristoyl glycine. The Protein kinase domain occupies 72–326 (YIIDEKLGQG…IEEALNHPWI (255 aa)). Residues 78–86 (LGQGTYGCV) and lysine 101 contribute to the ATP site. Aspartate 192 (proton acceptor) is an active-site residue. A J domain autoinhibitory motif motif is present at residues 345 to 353 (NLKNFKKEN). Positions 345–380 (NLKNFKKENELKKIALTIIAKHLCDVEINNLRNIFI) are j domain. The J domain EF-hand interaction motif signature appears at 354 to 363 (ELKKIALTII). EF-hand domains are found at residues 370 to 405 (VEIN…IGYQ), 406 to 441 (KIPP…KQTY), 442 to 477 (LKKE…DDIE), and 480 to 513 (LIDK…SKKK). 5 residues coordinate Ca(2+): aspartate 383, aspartate 385, serine 387, threonine 389, and glutamate 394. Ca(2+)-binding residues include aspartate 455, aspartate 457, asparagine 459, lysine 461, glutamate 466, aspartate 493, asparagine 495, aspartate 497, glutamate 499, and glutamate 504.

The protein belongs to the protein kinase superfamily. Ser/Thr protein kinase family. CDPK subfamily. Monomer. It depends on Mg(2+) as a cofactor. Myristoylated; myristoylation may target it to different subcellular compartments. In terms of processing, autophosphorylated in vitro.

It catalyses the reaction L-seryl-[protein] + ATP = O-phospho-L-seryl-[protein] + ADP + H(+). The enzyme catalyses L-threonyl-[protein] + ATP = O-phospho-L-threonyl-[protein] + ADP + H(+). Activated by calcium. Upon calcium binding to the EF-hand domains, the C-terminus of the junction domain (J domain) undergoes a conformational change which results in the dissociation of the pseudo-substrate inhibitory motif from the catalytic domain. This, in turn, may facilitate the autophosphorylation of the activation loop at Thr-232, which leads to the kinase activation. Calcium-dependent protein kinase which acts as a sensor and effector of intracellular Ca(2+) levels probably in part downstream of cGMP-activated PKG kinase. During male gametogenesis in the mosquito gut, required for male exflagellation, possibly by regulating male gamete exit from the host erythrocytes. Not required for asexual blood stage proliferation. The sequence is that of Calcium-dependent protein kinase 2 from Plasmodium falciparum (isolate K1 / Thailand).